Consider the following 423-residue polypeptide: UDP-N-acetylglucosamine 1-carboxyvinyltransferase 1 (423 aa).

K23–N24 provides a ligand contact to phosphoenolpyruvate. Position 96 (R96) interacts with UDP-N-acetyl-alpha-D-glucosamine. Residue C120 is the Proton donor of the active site. At C120 the chain carries 2-(S-cysteinyl)pyruvic acid O-phosphothioketal. Residues R125–L129, D309, and V331 each bind UDP-N-acetyl-alpha-D-glucosamine.

This sequence belongs to the EPSP synthase family. MurA subfamily.

The protein localises to the cytoplasm. It catalyses the reaction phosphoenolpyruvate + UDP-N-acetyl-alpha-D-glucosamine = UDP-N-acetyl-3-O-(1-carboxyvinyl)-alpha-D-glucosamine + phosphate. It participates in cell wall biogenesis; peptidoglycan biosynthesis. Its function is as follows. Cell wall formation. Adds enolpyruvyl to UDP-N-acetylglucosamine. The protein is UDP-N-acetylglucosamine 1-carboxyvinyltransferase 1 of Streptococcus thermophilus (strain ATCC BAA-250 / LMG 18311).